Here is a 549-residue protein sequence, read N- to C-terminus: Probable serine/threonine-protein kinase WNK5 (549 aa).

The region spanning Gly-25 to Leu-283 is the Protein kinase domain. ATP contacts are provided by residues Thr-105–Phe-108 and Lys-155. The active-site Proton acceptor is the Asp-172. The disordered stretch occupies residues Glu-414 to Gln-490. The segment covering Asp-452 to Asp-463 has biased composition (acidic residues). Residues Arg-467–Ser-476 are compositionally biased toward low complexity. Ser-504 bears the Phosphoserine mark. A disordered region spans residues Arg-525–Cys-549. Residues Pro-531–Cys-549 show a composition bias toward polar residues.

The protein belongs to the protein kinase superfamily. Ser/Thr protein kinase family. WNK subfamily. Interacts with AHK4.

It catalyses the reaction L-seryl-[protein] + ATP = O-phospho-L-seryl-[protein] + ADP + H(+). The catalysed reaction is L-threonyl-[protein] + ATP = O-phospho-L-threonyl-[protein] + ADP + H(+). Functionally, regulates flowering time by modulating the photoperiod pathway. This is Probable serine/threonine-protein kinase WNK5 (WNK5) from Arabidopsis thaliana (Mouse-ear cress).